Here is a 216-residue protein sequence, read N- to C-terminus: Cytidylate kinase (216 aa).

Residue Gly-7–Thr-15 participates in ATP binding.

The protein belongs to the cytidylate kinase family. Type 1 subfamily.

It is found in the cytoplasm. It catalyses the reaction CMP + ATP = CDP + ADP. It carries out the reaction dCMP + ATP = dCDP + ADP. This chain is Cytidylate kinase, found in Chlamydia muridarum (strain MoPn / Nigg).